The sequence spans 550 residues: Dihydroxy-acid dehydratase (550 aa).

Aspartate 78 contacts Mg(2+). Cysteine 119 lines the [2Fe-2S] cluster pocket. 2 residues coordinate Mg(2+): aspartate 120 and lysine 121. Residue lysine 121 is modified to N6-carboxylysine. [2Fe-2S] cluster is bound at residue cysteine 192. Glutamate 440 provides a ligand contact to Mg(2+). Serine 466 functions as the Proton acceptor in the catalytic mechanism.

The protein belongs to the IlvD/Edd family. In terms of assembly, homodimer. It depends on [2Fe-2S] cluster as a cofactor. Mg(2+) serves as cofactor.

The catalysed reaction is (2R)-2,3-dihydroxy-3-methylbutanoate = 3-methyl-2-oxobutanoate + H2O. It catalyses the reaction (2R,3R)-2,3-dihydroxy-3-methylpentanoate = (S)-3-methyl-2-oxopentanoate + H2O. The protein operates within amino-acid biosynthesis; L-isoleucine biosynthesis; L-isoleucine from 2-oxobutanoate: step 3/4. It participates in amino-acid biosynthesis; L-valine biosynthesis; L-valine from pyruvate: step 3/4. In terms of biological role, functions in the biosynthesis of branched-chain amino acids. Catalyzes the dehydration of (2R,3R)-2,3-dihydroxy-3-methylpentanoate (2,3-dihydroxy-3-methylvalerate) into 2-oxo-3-methylpentanoate (2-oxo-3-methylvalerate) and of (2R)-2,3-dihydroxy-3-methylbutanoate (2,3-dihydroxyisovalerate) into 2-oxo-3-methylbutanoate (2-oxoisovalerate), the penultimate precursor to L-isoleucine and L-valine, respectively. The protein is Dihydroxy-acid dehydratase of Thermodesulfovibrio yellowstonii (strain ATCC 51303 / DSM 11347 / YP87).